An 84-amino-acid polypeptide reads, in one-letter code: Small ribosomal subunit protein uS17 (84 aa).

This sequence belongs to the universal ribosomal protein uS17 family. As to quaternary structure, part of the 30S ribosomal subunit.

One of the primary rRNA binding proteins, it binds specifically to the 5'-end of 16S ribosomal RNA. The sequence is that of Small ribosomal subunit protein uS17 from Histophilus somni (strain 129Pt) (Haemophilus somnus).